The primary structure comprises 88 residues: DNA-directed RNA polymerase subunit omega (88 aa).

It belongs to the RNA polymerase subunit omega family. In terms of assembly, the RNAP catalytic core consists of 2 alpha, 1 beta, 1 beta' and 1 omega subunit. When a sigma factor is associated with the core the holoenzyme is formed, which can initiate transcription.

The catalysed reaction is RNA(n) + a ribonucleoside 5'-triphosphate = RNA(n+1) + diphosphate. In terms of biological role, promotes RNA polymerase assembly. Latches the N- and C-terminal regions of the beta' subunit thereby facilitating its interaction with the beta and alpha subunits. This is DNA-directed RNA polymerase subunit omega from Clostridioides difficile (strain 630) (Peptoclostridium difficile).